Here is a 146-residue protein sequence, read N- to C-terminus: Ribosome maturation factor RimP (146 aa).

This sequence belongs to the RimP family.

The protein resides in the cytoplasm. Its function is as follows. Required for maturation of 30S ribosomal subunits. This chain is Ribosome maturation factor RimP, found in Helicobacter pylori (strain J99 / ATCC 700824) (Campylobacter pylori J99).